Consider the following 432-residue polypeptide: Interleukin-11 receptor subunit alpha-1 (432 aa).

An N-terminal signal peptide occupies residues 1 to 23 (MSSSCSGLTRVLVAVATALVSSS). The Extracellular portion of the chain corresponds to 24–372 (SPCPQAWGPP…DPLEQVAVLA (349 aa)). Residues 27–110 (PQAWGPPGVQ…SGGMVTLKLG (84 aa)) enclose the Ig-like C2-type domain. 3 cysteine pairs are disulfide-bonded: Cys-48/Cys-94, Cys-120/Cys-130, and Cys-170/Cys-180. 2 Fibronectin type-III domains span residues 112–219 (PPAR…LRPD) and 220–317 (PPQG…TPST). Residue Asn-127 is glycosylated (N-linked (GlcNAc...) asparagine). Positions 151 to 170 (KTLPGAESQRESPSTGPWPC) are disordered. Asn-194 carries N-linked (GlcNAc...) asparagine glycosylation. The WSXWS motif motif lies at 304–308 (WSAWS). Disordered stretches follow at residues 309–332 (PEAW…QGHG) and 342–361 (EDSP…PLDH). Residues 373-393 (SLGIFSCLGLAVGALALGLWL) traverse the membrane as a helical segment. At 394–432 (RLRRSGKDGPQKPGLLAPMIPVEKLPGIPNLQRTPENFS) the chain is on the cytoplasmic side.

Belongs to the type I cytokine receptor family. Type 3 subfamily. On IL11 binding, forms a multimer complex with IL6ST/gp130. Post-translationally, a short soluble form is also released from the membrane by proteolysis. The sIL11RA is formed either by limited proteolysis of membrane-bound receptors, a process referred to as ectodomain shedding, or directly secreted from the cells after alternative mRNA splicing. mIL11RA is cleaved by the proteases ADAM10, ELANE and PRTN3. In terms of tissue distribution, widely expressed in all adult tissues and in embryos. Highest levels in kidney, skeletal muscle and embryo.

It localises to the membrane. The protein localises to the secreted. Receptor for interleukin-11. The receptor systems for IL6, LIF, OSM, CNTF, IL11 and CT1 can utilize IL6ST for initiating signal transmission. The IL11/IL11RA/IL6ST complex may be involved in the control of proliferation and/or differentiation of skeletogenic progenitor or other mesenchymal cells. Essential for the normal development of craniofacial bones and teeth. Functionally, soluble form of IL11 receptor (sIL11RA) that acts as an agonist of IL11 activity. The IL11:sIL11RA complex binds to IL6ST/gp130 on cell surfaces and induces signaling also on cells that do not express membrane-bound IL11RA in a process called IL11 trans-signaling. This chain is Interleukin-11 receptor subunit alpha-1, found in Mus musculus (Mouse).